Reading from the N-terminus, the 333-residue chain is NADH-quinone oxidoreductase subunit H (333 aa).

The next 8 helical transmembrane spans lie at 15 to 35 (FFIF…FVTY), 88 to 108 (FILA…VIPF), 117 to 137 (IGVG…GVLT), 159 to 179 (ISYE…TGSL), 191 to 211 (VWYI…AVAE), 241 to 261 (FFML…TVLF), 273 to 293 (FIPG…LFIW), and 313 to 333 (VLLP…ELFF).

This sequence belongs to the complex I subunit 1 family. In terms of assembly, NDH-1 is composed of 14 different subunits. Subunits NuoA, H, J, K, L, M, N constitute the membrane sector of the complex.

It localises to the cell membrane. It carries out the reaction a quinone + NADH + 5 H(+)(in) = a quinol + NAD(+) + 4 H(+)(out). Functionally, NDH-1 shuttles electrons from NADH, via FMN and iron-sulfur (Fe-S) centers, to quinones in the respiratory chain. The immediate electron acceptor for the enzyme in this species is believed to be ubiquinone. Couples the redox reaction to proton translocation (for every two electrons transferred, four hydrogen ions are translocated across the cytoplasmic membrane), and thus conserves the redox energy in a proton gradient. This subunit may bind ubiquinone. The chain is NADH-quinone oxidoreductase subunit H from Bacillus cytotoxicus (strain DSM 22905 / CIP 110041 / 391-98 / NVH 391-98).